The primary structure comprises 134 residues: Fluoride-specific ion channel FluC (134 aa).

4 helical membrane-spanning segments follow: residues Leu7–Ala27, Gly38–Val58, Leu69–Ser89, and Val110–His130. Na(+)-binding residues include Gly77 and Thr80.

This sequence belongs to the fluoride channel Fluc/FEX (TC 1.A.43) family.

The protein resides in the cell inner membrane. It catalyses the reaction fluoride(in) = fluoride(out). With respect to regulation, na(+) is not transported, but it plays an essential structural role and its presence is essential for fluoride channel function. Its function is as follows. Fluoride-specific ion channel. Important for reducing fluoride concentration in the cell, thus reducing its toxicity. The chain is Fluoride-specific ion channel FluC from Legionella pneumophila subsp. pneumophila (strain Philadelphia 1 / ATCC 33152 / DSM 7513).